The sequence spans 150 residues: Transcriptional repressor NrdR (150 aa).

A zinc finger lies at 3–34; the sequence is CPFCAFADSKVVDSRPDKEGSTIRRRRECESC. Positions 49-139 constitute an ATP-cone domain; sequence PLVIKKDGRR…VYRSFKDITE (91 aa).

Belongs to the NrdR family. The cofactor is Zn(2+).

Negatively regulates transcription of bacterial ribonucleotide reductase nrd genes and operons by binding to NrdR-boxes. In Geotalea daltonii (strain DSM 22248 / JCM 15807 / FRC-32) (Geobacter daltonii), this protein is Transcriptional repressor NrdR.